The following is a 72-amino-acid chain: UPF0270 protein ESA_04379 (72 aa).

Belongs to the UPF0270 family.

The protein is UPF0270 protein ESA_04379 of Cronobacter sakazakii (strain ATCC BAA-894) (Enterobacter sakazakii).